Consider the following 462-residue polypeptide: MTLFARIPKVDKILEWDGTKVLLGIHPRPTVLNAVRSVLDSLRTAARSGFLKEEELLEGAVASRIEREVARSTAFSLRRVVNGTGVVIHTNLGRSPLSKRVKPLLDEIAFGYSNLEFDLEKGERGSRYSHVERLLCDLTGAEAALVVNNNAAAVLLALSALAAGKEVVVSRGELVEIGGSFRIPDVMGQGGAILREVGTTNRTHPRDYHQAVSEQTALLLKVHSSNFAVVGFTAEVSATELVAIGKEHSVPVMADIGSGCLLDLSPFGIRGEPTVQEFVKAGVDVITFSGDKLLGGPQAGIIVGRREFIAPLTQHPLLRALRIDKLTLAALEGTLRLYRDERLALAEIPTLRMLTASAAELATRARSFARRIRRASPPDIRLTLTSGISQVGGGAYPLLELPTTLMAMEADGISPQEMEIRLRGMEVPVTGRIHRGRFLLDVRTLQDDDIPFIAAALSSLAD.

At K292 the chain carries N6-(pyridoxal phosphate)lysine.

This sequence belongs to the SelA family. It depends on pyridoxal 5'-phosphate as a cofactor.

Its subcellular location is the cytoplasm. It catalyses the reaction L-seryl-tRNA(Sec) + selenophosphate + H(+) = L-selenocysteinyl-tRNA(Sec) + phosphate. It functions in the pathway aminoacyl-tRNA biosynthesis; selenocysteinyl-tRNA(Sec) biosynthesis; selenocysteinyl-tRNA(Sec) from L-seryl-tRNA(Sec) (bacterial route): step 1/1. Functionally, converts seryl-tRNA(Sec) to selenocysteinyl-tRNA(Sec) required for selenoprotein biosynthesis. This is L-seryl-tRNA(Sec) selenium transferase from Geobacter metallireducens (strain ATCC 53774 / DSM 7210 / GS-15).